Here is a 285-residue protein sequence, read N- to C-terminus: Probable xyloglucan endotransglucosylase/hydrolase protein 12 (285 aa).

A signal peptide spans 1–25 (MAAFATKQSPLLLASLLILIGVATG). The GH16 domain maps to 26-215 (SFYDSFDITW…WTNAPFSASY (190 aa)). The active-site Nucleophile is the Glu101. Glu105 functions as the Proton donor in the catalytic mechanism. Residue Glu105 participates in xyloglucan binding. N-linked (GlcNAc...) asparagine glycosylation is present at Asn109. Residues 118-120 (HTN), 128-130 (NRE), 194-195 (DW), and Gly199 contribute to the xyloglucan site. 2 disulfide bridges follow: Cys224–Cys235 and Cys268–Cys282. Arg273 is a binding site for xyloglucan.

Belongs to the glycosyl hydrolase 16 family. XTH group 2 subfamily. In terms of processing, contains at least one intrachain disulfide bond essential for its enzymatic activity. In terms of tissue distribution, root specific.

It is found in the secreted. Its subcellular location is the cell wall. It localises to the extracellular space. The protein localises to the apoplast. It catalyses the reaction breaks a beta-(1-&gt;4) bond in the backbone of a xyloglucan and transfers the xyloglucanyl segment on to O-4 of the non-reducing terminal glucose residue of an acceptor, which can be a xyloglucan or an oligosaccharide of xyloglucan.. Its function is as follows. Catalyzes xyloglucan endohydrolysis (XEH) and/or endotransglycosylation (XET). Cleaves and religates xyloglucan polymers, an essential constituent of the primary cell wall, and thereby participates in cell wall construction of growing tissues. The sequence is that of Probable xyloglucan endotransglucosylase/hydrolase protein 12 (XTH12) from Arabidopsis thaliana (Mouse-ear cress).